The chain runs to 61 residues: Small ribosomal subunit protein uS14 (61 aa).

The Zn(2+) site is built by C24, C27, C40, and C43.

This sequence belongs to the universal ribosomal protein uS14 family. Zinc-binding uS14 subfamily. In terms of assembly, part of the 30S ribosomal subunit. Contacts proteins S3 and S10. Zn(2+) serves as cofactor.

Functionally, binds 16S rRNA, required for the assembly of 30S particles and may also be responsible for determining the conformation of the 16S rRNA at the A site. This Coprothermobacter proteolyticus (strain ATCC 35245 / DSM 5265 / OCM 4 / BT) protein is Small ribosomal subunit protein uS14.